A 149-amino-acid polypeptide reads, in one-letter code: D-aminoacyl-tRNA deacylase (149 aa).

Residues 137–138 (GP) carry the Gly-cisPro motif, important for rejection of L-amino acids motif.

This sequence belongs to the DTD family. As to quaternary structure, homodimer.

Its subcellular location is the cytoplasm. The enzyme catalyses glycyl-tRNA(Ala) + H2O = tRNA(Ala) + glycine + H(+). The catalysed reaction is a D-aminoacyl-tRNA + H2O = a tRNA + a D-alpha-amino acid + H(+). An aminoacyl-tRNA editing enzyme that deacylates mischarged D-aminoacyl-tRNAs. Also deacylates mischarged glycyl-tRNA(Ala), protecting cells against glycine mischarging by AlaRS. Acts via tRNA-based rather than protein-based catalysis; rejects L-amino acids rather than detecting D-amino acids in the active site. By recycling D-aminoacyl-tRNA to D-amino acids and free tRNA molecules, this enzyme counteracts the toxicity associated with the formation of D-aminoacyl-tRNA entities in vivo and helps enforce protein L-homochirality. The chain is D-aminoacyl-tRNA deacylase from Clostridium tetani (strain Massachusetts / E88).